The primary structure comprises 132 residues: Small ribosomal subunit protein uS8 (132 aa).

The protein belongs to the universal ribosomal protein uS8 family. In terms of assembly, part of the 30S ribosomal subunit. Contacts proteins S5 and S12.

One of the primary rRNA binding proteins, it binds directly to 16S rRNA central domain where it helps coordinate assembly of the platform of the 30S subunit. This Bifidobacterium adolescentis (strain ATCC 15703 / DSM 20083 / NCTC 11814 / E194a) protein is Small ribosomal subunit protein uS8.